The chain runs to 595 residues: Parathyroid hormone/parathyroid hormone-related peptide receptor (595 aa).

The first 28 residues, 1–28 (MGAVRIAPGLALLLCCPVLSSAYALVDA), serve as a signal peptide directing secretion. Topologically, residues 29 to 188 (DDVMTKEEQI…REREVFDRLG (160 aa)) are extracellular. 3 disulfide bridges follow: Cys-48–Cys-117, Cys-108–Cys-148, and Cys-131–Cys-170. The tract at residues 66 to 103 (DKGWASASTSGKPKKEKASGKLYPESEEDKEVPTGSRH) is disordered. Asn-151, Asn-161, Asn-166, and Asn-176 each carry an N-linked (GlcNAc...) asparagine glycan. A helical transmembrane segment spans residues 189 to 209 (MIYTVGYSVSLASLTVAVLIL). Residues 210–223 (AYFRRLHCTRNYIH) lie on the Cytoplasmic side of the membrane. The chain crosses the membrane as a helical span at residues 224 to 244 (MHLFLSFMLRAVSIFVKDAVL). The Extracellular segment spans residues 245–294 (YSGATLDEAERLTEEELRAIAQAPPPPTAAAGYAGCRVAVTFFLYFLATN). Residues 295–315 (YYWILVEGLYLHSLIFMAFFS) traverse the membrane as a helical segment. Topologically, residues 316–318 (EKK) are cytoplasmic. Residues 319-339 (YLWGFTVFGWGLPAVFVAVWV) form a helical membrane-spanning segment. Residues 340 to 360 (SVRATLANTGCWDLSSGNKKW) lie on the Extracellular side of the membrane. Residues 361–381 (IIQVPILASIVLNFILFINIV) form a helical membrane-spanning segment. At 382 to 404 (RVLATKLRETNAGRCDTRQQYRK) the chain is on the cytoplasmic side. The helical transmembrane segment at 405 to 425 (LLKSTLVLMPLFGVHYIVFMA) threads the bilayer. Topologically, residues 426–439 (TPYTEVSGTLWQVQ) are extracellular. The chain crosses the membrane as a helical span at residues 440–460 (MHYEMLFNSFQGFFVAIIYCF). Topologically, residues 461 to 595 (CNGEVQAEIK…LLQEEWETVM (135 aa)) are cytoplasmic. An Important for interaction with G proteins motif is present at residues 473–476 (WSRW). The segment at 528–595 (TTTATTNGHP…LLQEEWETVM (68 aa)) is disordered. Residues 547 to 559 (APTLPATPPATAA) show a composition bias toward low complexity. At Thr-553 the chain carries Phosphothreonine.

The protein belongs to the G-protein coupled receptor 2 family. In terms of assembly, homodimer in the absence of bound ligand. Peptide hormone binding leads to dissociation of the homodimer. Post-translationally, N-glycosylated. In terms of tissue distribution, high levels in the kidney, with much lower levels in aorta, heart, lung, prostate, testis, and skeletal muscle.

It is found in the cell membrane. Its function is as follows. G-protein-coupled receptor for parathyroid hormone (PTH) and for parathyroid hormone-related peptide (PTHLH). Ligand binding causes a conformation change that triggers signaling via guanine nucleotide-binding proteins (G proteins) and modulates the activity of downstream effectors, such as adenylate cyclase (cAMP). PTH1R is coupled to G(s) G alpha proteins and mediates activation of adenylate cyclase activity. PTHLH dissociates from PTH1R more rapidly than PTH; as consequence, the cAMP response induced by PTHLH decays faster than the response induced by PTH. This Canis lupus familiaris (Dog) protein is Parathyroid hormone/parathyroid hormone-related peptide receptor (PTH1R).